We begin with the raw amino-acid sequence, 123 residues long: VQ motif-containing protein 29 (123 aa).

Residues 24–55 form a disordered region; that stretch reads TKNYLTSLHSTRKQPSKPLKRPAISSPLNPMH. Residues 33–43 show a composition bias toward basic residues; that stretch reads STRKQPSKPLK. The short motif at 66–75 is the VQ element; that stretch reads FKVLVQRLTG. The segment covering 77–94 has biased composition (basic and acidic residues); that stretch reads PEHETVQAKPLKTSDDAA. The interval 77 to 123 is disordered; sequence PEHETVQAKPLKTSDDAAKQSSSSFAFDPSSSWGDFSFQNPANISRW. Positions 97–108 are enriched in low complexity; that stretch reads SSSSFAFDPSSS. The segment covering 109–123 has biased composition (polar residues); sequence WGDFSFQNPANISRW.

It is found in the nucleus. May function as negative regulator of flowering transition. This Arabidopsis thaliana (Mouse-ear cress) protein is VQ motif-containing protein 29.